Consider the following 465-residue polypeptide: MIPVRGLEGRKVAVLGLGRSGLATARALEAGGAEPLLWDDSPEARAKAEGQGFTVTDLTRDRAFEGVALLVTSPGIPHLYPAPNPVIARAMAAGVPVDNDIGLFFRSFATRDWDAFDQMPRVVCVTGSNGKSTTTALIHHILSEAGRPTQMAGNIGRGVLDLDPARDGEVVVLELSSYQTDLARALTPDVAVFTNLSPDHLDRHGGMGGYFAAKRRLFAEGGPDRAVIGVDEPEGLYLAGQLSVAPEDDRVIRISSGQKLERFGWSVFARKGFLAEWRKGRQMASIDLRAMPGLPGAHNHQNACAAYAACRTLGLAPRQIEAALASFAGLPHRSQTVGEKGGVRFVNDSKATNVDSAAKALQAFPKIRWIAGGLGKDGGIVALQPHLGSVVKAYLIGHSARDFALQIGATDHEICETMERAVARAAEEAQPGEVVLLAPAAASFDQYPNFEKRGEDFMEKVKALL.

G127–T133 is an ATP binding site.

It belongs to the MurCDEF family.

The protein localises to the cytoplasm. The catalysed reaction is UDP-N-acetyl-alpha-D-muramoyl-L-alanine + D-glutamate + ATP = UDP-N-acetyl-alpha-D-muramoyl-L-alanyl-D-glutamate + ADP + phosphate + H(+). Its pathway is cell wall biogenesis; peptidoglycan biosynthesis. Cell wall formation. Catalyzes the addition of glutamate to the nucleotide precursor UDP-N-acetylmuramoyl-L-alanine (UMA). The sequence is that of UDP-N-acetylmuramoylalanine--D-glutamate ligase from Cereibacter sphaeroides (strain KD131 / KCTC 12085) (Rhodobacter sphaeroides).